The following is a 490-amino-acid chain: UDP-N-acetylmuramoyl-L-alanyl-D-glutamate--2,6-diaminopimelate ligase (490 aa).

S31 is a binding site for UDP-N-acetyl-alpha-D-muramoyl-L-alanyl-D-glutamate. G109 to S115 lines the ATP pocket. UDP-N-acetyl-alpha-D-muramoyl-L-alanyl-D-glutamate-binding positions include N150, T151–T152, S178, and R186. K218 carries the post-translational modification N6-carboxylysine. Residues R384, D408 to R411, G458, and E462 contribute to the meso-2,6-diaminopimelate site. A Meso-diaminopimelate recognition motif motif is present at residues D408–R411.

The protein belongs to the MurCDEF family. MurE subfamily. It depends on Mg(2+) as a cofactor. Post-translationally, carboxylation is probably crucial for Mg(2+) binding and, consequently, for the gamma-phosphate positioning of ATP.

Its subcellular location is the cytoplasm. It catalyses the reaction UDP-N-acetyl-alpha-D-muramoyl-L-alanyl-D-glutamate + meso-2,6-diaminopimelate + ATP = UDP-N-acetyl-alpha-D-muramoyl-L-alanyl-gamma-D-glutamyl-meso-2,6-diaminopimelate + ADP + phosphate + H(+). Its pathway is cell wall biogenesis; peptidoglycan biosynthesis. Functionally, catalyzes the addition of meso-diaminopimelic acid to the nucleotide precursor UDP-N-acetylmuramoyl-L-alanyl-D-glutamate (UMAG) in the biosynthesis of bacterial cell-wall peptidoglycan. In Bacillus velezensis (strain DSM 23117 / BGSC 10A6 / LMG 26770 / FZB42) (Bacillus amyloliquefaciens subsp. plantarum), this protein is UDP-N-acetylmuramoyl-L-alanyl-D-glutamate--2,6-diaminopimelate ligase.